A 62-amino-acid chain; its full sequence is UPF0337 protein XCC0070 (62 aa).

The interval 32–62 (LEGAAEKNIGKVQRKAGELADDVRDATKSTR) is disordered.

This sequence belongs to the UPF0337 (CsbD) family.

In Xanthomonas campestris pv. campestris (strain ATCC 33913 / DSM 3586 / NCPPB 528 / LMG 568 / P 25), this protein is UPF0337 protein XCC0070.